A 176-amino-acid polypeptide reads, in one-letter code: Small ribosomal subunit protein uS8c (176 aa).

It belongs to the universal ribosomal protein uS8 family. Part of the 30S ribosomal subunit.

It localises to the plastid. The protein resides in the chloroplast. Functionally, one of the primary rRNA binding proteins, it binds directly to 16S rRNA central domain where it helps coordinate assembly of the platform of the 30S subunit. The chain is Small ribosomal subunit protein uS8c (rps8) from Stigeoclonium helveticum (Green alga).